The sequence spans 303 residues: Glutaminase (303 aa).

Residues S63, N113, E157, N164, Y188, Y239, and V257 each coordinate substrate.

This sequence belongs to the glutaminase family. As to quaternary structure, homotetramer.

The enzyme catalyses L-glutamine + H2O = L-glutamate + NH4(+). The sequence is that of Glutaminase from Saccharopolyspora erythraea (strain ATCC 11635 / DSM 40517 / JCM 4748 / NBRC 13426 / NCIMB 8594 / NRRL 2338).